Consider the following 369-residue polypeptide: RNA-binding protein rnp24 (369 aa).

3 disordered regions span residues 1–77 (MEPI…KKKE), 200–219 (TDFS…TASI), and 304–369 (RMRN…IKFD). The RRM 1 domain occupies 105–206 (WGIWVGNLSF…KSNTDFSGRP (102 aa)). Polar residues predominate over residues 209 to 219 (PANTLSKTASI). Residues 228–310 (SILFVGNLDF…RSKRMRNKSP (83 aa)) enclose the RRM 2 domain. Residues 325 to 341 (QEDKPNFKRARKIDPRS) are compositionally biased toward basic and acidic residues. The span at 346–357 (AALAKAQRSSAA) shows a compositional bias: low complexity.

The protein localises to the nucleus. The sequence is that of RNA-binding protein rnp24 (rnp24) from Schizosaccharomyces pombe (strain 972 / ATCC 24843) (Fission yeast).